Reading from the N-terminus, the 156-residue chain is Biotin carboxyl carrier protein of acetyl-CoA carboxylase (156 aa).

Residues 73–156 (PAAAEISGHI…EFDEPLVVIE (84 aa)) enclose the Biotinyl-binding domain. Position 122 is an N6-biotinyllysine (Lys-122).

In terms of assembly, homodimer.

The protein operates within lipid metabolism; fatty acid biosynthesis. Its function is as follows. This protein is a component of the acetyl coenzyme A carboxylase complex; first, biotin carboxylase catalyzes the carboxylation of the carrier protein and then the transcarboxylase transfers the carboxyl group to form malonyl-CoA. This chain is Biotin carboxyl carrier protein of acetyl-CoA carboxylase (accB), found in Escherichia coli O6:H1 (strain CFT073 / ATCC 700928 / UPEC).